Consider the following 186-residue polypeptide: Nuclear transcription factor Y subunit C-5 (186 aa).

The interval 166–186 (QMPGAWTEEDATGANGGNGGN) is disordered.

It belongs to the NFYC/HAP5 subunit family. As to quaternary structure, heterotrimeric transcription factor composed of three components, NF-YA, NF-YB and NF-YC. NF-YB and NF-YC must interact and dimerize for NF-YA association and DNA binding. Expressed in inflorescences and flowers.

Its subcellular location is the nucleus. Its function is as follows. Stimulates the transcription of various genes by recognizing and binding to a CCAAT motif in promoters. The protein is Nuclear transcription factor Y subunit C-5 (NFYC5) of Arabidopsis thaliana (Mouse-ear cress).